The chain runs to 108 residues: Heme-degrading monooxygenase HmoA (108 aa).

In terms of domain architecture, ABM spans 2–95; the sequence is FVQLRKMTVK…DYLISTEVSM (94 aa). Residue His76 coordinates heme.

Belongs to the antibiotic biosynthesis monooxygenase family. Homodimer.

It is found in the cytoplasm. It catalyses the reaction heme b + 3 reduced [NADPH--hemoprotein reductase] + 3 O2 = biliverdin IXalpha + CO + Fe(2+) + 3 oxidized [NADPH--hemoprotein reductase] + 3 H2O + H(+). Its function is as follows. Allows bacterial pathogens to use the host heme as an iron source. Catalyzes the oxidative degradation of the heme macrocyclic porphyrin ring in the presence of a suitable electron donor such as ascorbate or NADPH--cytochrome P450 reductase, with subsequent release of free iron. The polypeptide is Heme-degrading monooxygenase HmoA (hmoA) (Bacillus subtilis (strain 168)).